A 423-amino-acid polypeptide reads, in one-letter code: UDP-N-acetylglucosamine 1-carboxyvinyltransferase 1 (423 aa).

23 to 24 (KN) is a binding site for phosphoenolpyruvate. Arg-96 contributes to the UDP-N-acetyl-alpha-D-glucosamine binding site. The active-site Proton donor is Cys-120. The residue at position 120 (Cys-120) is a 2-(S-cysteinyl)pyruvic acid O-phosphothioketal. Residues 125–129 (RPIDL), Asp-309, and Val-331 each bind UDP-N-acetyl-alpha-D-glucosamine.

Belongs to the EPSP synthase family. MurA subfamily.

Its subcellular location is the cytoplasm. It carries out the reaction phosphoenolpyruvate + UDP-N-acetyl-alpha-D-glucosamine = UDP-N-acetyl-3-O-(1-carboxyvinyl)-alpha-D-glucosamine + phosphate. It participates in cell wall biogenesis; peptidoglycan biosynthesis. Functionally, cell wall formation. Adds enolpyruvyl to UDP-N-acetylglucosamine. This Streptococcus mutans serotype c (strain ATCC 700610 / UA159) protein is UDP-N-acetylglucosamine 1-carboxyvinyltransferase 1.